A 433-amino-acid chain; its full sequence is Probable D-serine dehydratase (433 aa).

Lys110 is subject to N6-(pyridoxal phosphate)lysine.

The protein belongs to the serine/threonine dehydratase family. DsdA subfamily. Pyridoxal 5'-phosphate is required as a cofactor.

The catalysed reaction is D-serine = pyruvate + NH4(+). This is Probable D-serine dehydratase from Oenococcus oeni (strain ATCC BAA-331 / PSU-1).